The primary structure comprises 586 residues: Pyruvate kinase (586 aa).

Residue R32 participates in substrate binding. Positions 34, 36, 66, and 67 each coordinate K(+). 34–37 (NFSH) contributes to the ATP binding site. R73 and K156 together coordinate ATP. Mg(2+) is bound at residue E222. Substrate contacts are provided by G245, D246, and T278. D246 contributes to the Mg(2+) binding site.

This sequence belongs to the pyruvate kinase family. In the C-terminal section; belongs to the PEP-utilizing enzyme family. Homotetramer. The cofactor is Mg(2+). K(+) is required as a cofactor.

The enzyme catalyses pyruvate + ATP = phosphoenolpyruvate + ADP + H(+). It functions in the pathway carbohydrate degradation; glycolysis; pyruvate from D-glyceraldehyde 3-phosphate: step 5/5. The polypeptide is Pyruvate kinase (pyk) (Sporosarcina psychrophila (Bacillus psychrophilus)).